We begin with the raw amino-acid sequence, 204 residues long: Large ribosomal subunit protein uL3c (204 aa).

A disordered region spans residues 126–155; that stretch reads HNFTRGPMTHGSKNHREPGSIGQGSTPAKV.

This sequence belongs to the universal ribosomal protein uL3 family. In terms of assembly, part of the 50S ribosomal subunit.

It is found in the plastid. The protein resides in the chloroplast. Functionally, one of the primary rRNA binding proteins, it binds directly near the 3'-end of the 23S rRNA, where it nucleates assembly of the 50S subunit. The protein is Large ribosomal subunit protein uL3c (rpl3) of Guillardia theta (Cryptophyte).